A 457-amino-acid chain; its full sequence is Succinate-semialdehyde dehydrogenase [NADP(+)] (457 aa).

Residues 133–134 (WN), 157–160 (KHAS), and 209–210 (GS) contribute to the NADP(+) site. Catalysis depends on Glu-231, which acts as the Proton acceptor. Residue Leu-232 coordinates NADP(+). Cys-265 serves as the catalytic Nucleophile. Glu-362 contacts NADP(+).

The protein belongs to the aldehyde dehydrogenase family.

It catalyses the reaction succinate semialdehyde + NADP(+) + H2O = succinate + NADPH + 2 H(+). In terms of biological role, catalyzes the NADP(+)-dependent oxidation of succinate semialdehyde to succinate. It is believed to be the main source of succinate semialdehyde dehydrogenase activity in Mycobacterium. The polypeptide is Succinate-semialdehyde dehydrogenase [NADP(+)] (gabD1) (Mycobacterium leprae (strain TN)).